We begin with the raw amino-acid sequence, 134 residues long: Small ribosomal subunit protein uS11 (134 aa).

The protein belongs to the universal ribosomal protein uS11 family. Part of the 30S ribosomal subunit. Interacts with proteins S7 and S18. Binds to IF-3.

Its function is as follows. Located on the platform of the 30S subunit, it bridges several disparate RNA helices of the 16S rRNA. Forms part of the Shine-Dalgarno cleft in the 70S ribosome. This chain is Small ribosomal subunit protein uS11, found in Variovorax paradoxus (strain S110).